The chain runs to 611 residues: Pseudomonine synthase PmsE (611 aa).

Residues 533–608 form the Carrier domain; it reads VSVENTRTWL…SWWALVEARQ (76 aa). An O-(pantetheine 4'-phosphoryl)serine modification is found at S569.

This sequence belongs to the ATP-dependent AMP-binding enzyme family. The cofactor is pantetheine 4'-phosphate.

The catalysed reaction is salicylate + holo-[ACP] + ATP = salicyl-[ACP] + AMP + diphosphate. It functions in the pathway siderophore biosynthesis; pseudomonine biosynthesis. Its function is as follows. Involved in the biosynthesis of the siderophore pseudomonine. Specifically adenylates salicylate and loads it onto its peptidyl carrier domain, via a thioester linkage to the phosphopanthetheine moiety. The chain is Pseudomonine synthase PmsE from Pseudomonas entomophila (strain L48).